The following is a 61-amino-acid chain: Bactericidin B-5P (61 aa).

The first 22 residues, 1-22 (MNFSRVLFFVFACLSAFAMASA), serve as a signal peptide directing secretion. The propeptide at 23 to 24 (AP) is removed by a dipeptidylpeptidase. Gly60 bears the Glycine amide mark.

Belongs to the cecropin family.

The protein resides in the secreted. Functionally, cecropins have lytic and antibacterial activity against several Gram-positive and Gram-negative bacteria. The sequence is that of Bactericidin B-5P from Manduca sexta (Tobacco hawkmoth).